The primary structure comprises 39 residues: Photosystem II reaction center protein J (39 aa).

The helical transmembrane segment at 9 to 29 threads the bilayer; the sequence is LWLVGLVGGLAVITMLGLFIY.

Belongs to the PsbJ family. In terms of assembly, PSII is composed of 1 copy each of membrane proteins PsbA, PsbB, PsbC, PsbD, PsbE, PsbF, PsbH, PsbI, PsbJ, PsbK, PsbL, PsbM, PsbT, PsbX, PsbY, PsbZ, Psb30/Ycf12, at least 3 peripheral proteins of the oxygen-evolving complex and a large number of cofactors. It forms dimeric complexes.

The protein resides in the plastid. Its subcellular location is the chloroplast thylakoid membrane. In terms of biological role, one of the components of the core complex of photosystem II (PSII). PSII is a light-driven water:plastoquinone oxidoreductase that uses light energy to abstract electrons from H(2)O, generating O(2) and a proton gradient subsequently used for ATP formation. It consists of a core antenna complex that captures photons, and an electron transfer chain that converts photonic excitation into a charge separation. The protein is Photosystem II reaction center protein J of Phaeodactylum tricornutum (strain CCAP 1055/1).